The following is an 85-amino-acid chain: NAD(P)H-quinone oxidoreductase subunit O (85 aa).

The protein belongs to the complex I NdhO subunit family. As to quaternary structure, NDH-1 can be composed of about 15 different subunits; different subcomplexes with different compositions have been identified which probably have different functions.

The protein localises to the cellular thylakoid membrane. The catalysed reaction is a plastoquinone + NADH + (n+1) H(+)(in) = a plastoquinol + NAD(+) + n H(+)(out). It catalyses the reaction a plastoquinone + NADPH + (n+1) H(+)(in) = a plastoquinol + NADP(+) + n H(+)(out). NDH-1 shuttles electrons from an unknown electron donor, via FMN and iron-sulfur (Fe-S) centers, to quinones in the respiratory and/or the photosynthetic chain. The immediate electron acceptor for the enzyme in this species is believed to be plastoquinone. Couples the redox reaction to proton translocation, and thus conserves the redox energy in a proton gradient. Cyanobacterial NDH-1 also plays a role in inorganic carbon-concentration. The polypeptide is NAD(P)H-quinone oxidoreductase subunit O (Synechococcus sp. (strain CC9311)).